Reading from the N-terminus, the 310-residue chain is MAKIVVALGGNALGKSPQEQLELVKNTAKSLVGLITKGHEIVISHGNGPQVGSINLGLNYAAEHNQGPAFPFAECGAMSQAYIGYQLQESLQNELHSIGMNKQVVTLVTQVEVDENDPAFNNPSKPIGLFYNKEEAEQIQKEKGFIFVEDAGRGYRRVVPSPQPISIIELESIKTLIKNDTLVIAAGGGGIPVIREQHDGFKGIDAVIDKDKTSALLGANIQCDQLIILTAIDYVYINFNTENQQPLKTTNVDELKRYIDENQFAKGSMLPKIEAAISFIENNPKGSVLITSLNELDAALEGKVGTVIKK.

Belongs to the carbamate kinase family.

The protein resides in the cytoplasm. It catalyses the reaction hydrogencarbonate + NH4(+) + ATP = carbamoyl phosphate + ADP + H2O + H(+). It functions in the pathway metabolic intermediate metabolism; carbamoyl phosphate degradation; CO(2) and NH(3) from carbamoyl phosphate: step 1/1. The polypeptide is Carbamate kinase 1 (arcC1) (Staphylococcus aureus (strain bovine RF122 / ET3-1)).